The sequence spans 316 residues: tRNA dimethylallyltransferase (316 aa).

17–24 is an ATP binding site; it reads GPTASGKT. Residue 19 to 24 participates in substrate binding; it reads TASGKT. 4 interaction with substrate tRNA regions span residues 42–45, 166–170, 247–252, and 280–287; these read DSAL, QRLSR, RCVGYR, and KRQITWLR.

This sequence belongs to the IPP transferase family. As to quaternary structure, monomer. It depends on Mg(2+) as a cofactor.

The catalysed reaction is adenosine(37) in tRNA + dimethylallyl diphosphate = N(6)-dimethylallyladenosine(37) in tRNA + diphosphate. Catalyzes the transfer of a dimethylallyl group onto the adenine at position 37 in tRNAs that read codons beginning with uridine, leading to the formation of N6-(dimethylallyl)adenosine (i(6)A). This is tRNA dimethylallyltransferase from Escherichia coli O127:H6 (strain E2348/69 / EPEC).